A 664-amino-acid chain; its full sequence is DNA ligase (664 aa).

NAD(+) is bound by residues 32-36 (DAEYD), 81-82 (SL), and Glu-113. Lys-115 (N6-AMP-lysine intermediate) is an active-site residue. Arg-136, Glu-173, Lys-289, and Lys-313 together coordinate NAD(+). Zn(2+) contacts are provided by Cys-407, Cys-410, Cys-425, and Cys-431. The 79-residue stretch at 586 to 664 (ASEQPFAGKT…EEQLQAALQS (79 aa)) folds into the BRCT domain.

It belongs to the NAD-dependent DNA ligase family. LigA subfamily. Requires Mg(2+) as cofactor. Mn(2+) serves as cofactor.

The catalysed reaction is NAD(+) + (deoxyribonucleotide)n-3'-hydroxyl + 5'-phospho-(deoxyribonucleotide)m = (deoxyribonucleotide)n+m + AMP + beta-nicotinamide D-nucleotide.. DNA ligase that catalyzes the formation of phosphodiester linkages between 5'-phosphoryl and 3'-hydroxyl groups in double-stranded DNA using NAD as a coenzyme and as the energy source for the reaction. It is essential for DNA replication and repair of damaged DNA. This chain is DNA ligase, found in Aeromonas salmonicida (strain A449).